The following is a 473-amino-acid chain: Lactate utilization protein B (473 aa).

2 4Fe-4S ferredoxin-type domains span residues 302 to 332 (GSEFRQVLQCIRCAACVNVCPVYRHVGGHSY) and 351 to 380 (YDDYKELPYASSLCGACTEACPVKIPLHDL). The [4Fe-4S] cluster site is built by Cys-311, Cys-314, Cys-317, Cys-321, Cys-364, Cys-367, and Cys-371.

It belongs to the LutB/YkgF family.

Functionally, is involved in L-lactate degradation and allows cells to grow with lactate as the sole carbon source. Has probably a role as an electron transporter during oxidation of L-lactate. The sequence is that of Lactate utilization protein B from Bacillus anthracis (strain A0248).